The chain runs to 189 residues: ATP synthase subunit b (189 aa).

The helical transmembrane segment at 38-58 (PMFLATLIAFILVVLILWFLL) threads the bilayer.

The protein belongs to the ATPase B chain family. In terms of assembly, F-type ATPases have 2 components, F(1) - the catalytic core - and F(0) - the membrane proton channel. F(1) has five subunits: alpha(3), beta(3), gamma(1), delta(1), epsilon(1). F(0) has three main subunits: a(1), b(2) and c(10-14). The alpha and beta chains form an alternating ring which encloses part of the gamma chain. F(1) is attached to F(0) by a central stalk formed by the gamma and epsilon chains, while a peripheral stalk is formed by the delta and b chains.

It is found in the cell membrane. In terms of biological role, f(1)F(0) ATP synthase produces ATP from ADP in the presence of a proton or sodium gradient. F-type ATPases consist of two structural domains, F(1) containing the extramembraneous catalytic core and F(0) containing the membrane proton channel, linked together by a central stalk and a peripheral stalk. During catalysis, ATP synthesis in the catalytic domain of F(1) is coupled via a rotary mechanism of the central stalk subunits to proton translocation. Its function is as follows. Component of the F(0) channel, it forms part of the peripheral stalk, linking F(1) to F(0). This chain is ATP synthase subunit b, found in Mycoplasmopsis agalactiae (strain NCTC 10123 / CIP 59.7 / PG2) (Mycoplasma agalactiae).